The sequence spans 149 residues: Heat shock protein beta-3 (149 aa).

A sHSP domain is found at 47–149; sequence KARAAQAPPV…VEVKDSAGTK (103 aa).

It belongs to the small heat shock protein (HSP20) family.

It is found in the cytoplasm. It localises to the nucleus. Functionally, inhibitor of actin polymerization. The sequence is that of Heat shock protein beta-3 (HSPB3) from Bos taurus (Bovine).